The sequence spans 243 residues: Thaumatin-like protein 1 (243 aa).

A signal peptide spans 1 to 22; the sequence is MMKTLALYGLTLALFFLSGAHS. Disulfide bonds link Cys-31–Cys-242, Cys-79–Cys-88, Cys-93–Cys-100, Cys-148–Cys-231, Cys-153–Cys-214, Cys-161–Cys-177, Cys-181–Cys-190, and Cys-191–Cys-201.

The protein belongs to the thaumatin family.

The protein localises to the secreted. Its subcellular location is the extracellular space. The protein resides in the apoplast. In terms of biological role, possesses antifungal activity. The sequence is that of Thaumatin-like protein 1 (TL1) from Castanea sativa (Sweet chestnut).